The primary structure comprises 94 residues: PTS system galactitol-specific EIIB component (94 aa).

The region spanning 1 to 94 (MKRKIIVACG…QNKILTILQG (94 aa)) is the PTS EIIB type-2 domain. Cys9 acts as the Phosphocysteine intermediate; for EIIB activity in catalysis. Cys9 bears the Phosphocysteine; by EIIA mark.

In terms of assembly, forms a complex with one each of subunit of GatA, GatB and 2 subunits of GatC.

It localises to the cytoplasm. It catalyses the reaction galactitol(out) + N(pros)-phospho-L-histidyl-[protein] = galactitol 1-phosphate(in) + L-histidyl-[protein]. In terms of biological role, the phosphoenolpyruvate-dependent sugar phosphotransferase system (PTS), a major carbohydrate active transport system, catalyzes the phosphorylation of incoming sugar substrates concomitant with their translocation across the cell membrane. The enzyme II complex composed of GatA, GatB and GatC is involved in galactitol transport. It can also use D-glucitol. The polypeptide is PTS system galactitol-specific EIIB component (Escherichia coli (strain K12)).